The primary structure comprises 223 residues: MNIAKLIDHTILKANATKEDVMKVIEEAKEYKFASVCINPTWVKLAAEELAGHDVDVCTVIGFPLGASTTETKAFETKDAIAKGATEVDMVINVGALKDGDDELVEKDIYEVVQAAKGKALVKVIIETCLLTDEEKVRACELSVKAGADFVKTSTGFSTGGATAEDIALMRKTVGPNVGVKASGGVRTREDADKMVAAGASRIGASASVAIVLNDAKDATDNY.

D89 serves as the catalytic Proton donor/acceptor. Catalysis depends on K152, which acts as the Schiff-base intermediate with acetaldehyde. The active-site Proton donor/acceptor is K181.

It belongs to the DeoC/FbaB aldolase family. DeoC type 1 subfamily.

It localises to the cytoplasm. The enzyme catalyses 2-deoxy-D-ribose 5-phosphate = D-glyceraldehyde 3-phosphate + acetaldehyde. Its pathway is carbohydrate degradation; 2-deoxy-D-ribose 1-phosphate degradation; D-glyceraldehyde 3-phosphate and acetaldehyde from 2-deoxy-alpha-D-ribose 1-phosphate: step 2/2. In terms of biological role, catalyzes a reversible aldol reaction between acetaldehyde and D-glyceraldehyde 3-phosphate to generate 2-deoxy-D-ribose 5-phosphate. The polypeptide is Deoxyribose-phosphate aldolase (Bacillus cereus (strain AH187)).